A 68-amino-acid chain; its full sequence is Conotoxin reg3.14 (68 aa).

A signal peptide spans 1–22; that stretch reads MMSKLGVLLTICLLLFPLSVLP. Positions 23–52 are excised as a propeptide; sequence LDGDQPADQPAERMQDISAEQNPWFDPVKR. Disulfide bonds link cysteine 53-cysteine 68, cysteine 54-cysteine 64, and cysteine 59-cysteine 67.

Belongs to the conotoxin M superfamily. As to expression, expressed by the venom duct.

The protein localises to the secreted. The protein is Conotoxin reg3.14 of Conus regius (Crown cone).